The sequence spans 285 residues: RNA polymerase sigma factor RpoH (285 aa).

The tract at residues 53–122 (LILSHLRFVI…IHEYVLRNWR (70 aa)) is sigma-70 factor domain-2. An Interaction with polymerase core subunit RpoC motif is present at residues 77–80 (DLIQ). The interval 229–281 (ALLRLDERSRNIIRARWLDKKEKNTLQKIANNYGISAERVRQLEKNAMKKLKI) is sigma-70 factor domain-4. The H-T-H motif DNA-binding region spans 254–273 (LQKIANNYGISAERVRQLEK).

This sequence belongs to the sigma-70 factor family. RpoH subfamily. In terms of assembly, interacts with the RNA polymerase core enzyme.

It is found in the cytoplasm. Functionally, sigma factors are initiation factors that promote the attachment of RNA polymerase to specific initiation sites and are then released. This sigma factor is involved in regulation of expression of heat shock genes. The chain is RNA polymerase sigma factor RpoH from Buchnera aphidicola subsp. Schizaphis graminum (strain Sg).